The primary structure comprises 217 residues: Pre-mRNA-splicing factor sap62 (217 aa).

The Matrin-type zinc finger occupies 54 to 84; that stretch reads FECRLCLTTHANENSYLTHTQGKKHQTNLAR.

Belongs to the SF3A2 family. As to quaternary structure, belongs to the 40S cdc5-associated complex (or cwf complex), a spliceosome sub-complex reminiscent of a late-stage spliceosome composed of the U2, U5 and U6 snRNAs and at least brr2, cdc5, cwf2/prp3, cwf3/syf1, cwf4/syf3, cwf5/ecm2, spp42/cwf6, cwf7/spf27, cwf8, cwf9, cwf10, cwf11, cwf12, prp45/cwf13, cwf14, cwf15, cwf16, cwf17, cwf18, cwf19, cwf20, cwf21, cwf22, cwf23, cwf24, cwf25, cwf26, cyp7/cwf27, cwf28, cwf29/ist3, lea1, msl1, prp5/cwf1, prp10, prp12/sap130, prp17, prp22, sap61, sap62, sap114, sap145, slu7, smb1, smd1, smd3, smf1, smg1 and syf2.

It is found in the nucleus. The protein resides in the cytoplasm. Involved in mRNA splicing where it associates with cdc5 and the other cwf proteins as part of the spliceosome. In Schizosaccharomyces pombe (strain 972 / ATCC 24843) (Fission yeast), this protein is Pre-mRNA-splicing factor sap62 (sap62).